The chain runs to 158 residues: NAD(P)H-quinone oxidoreductase subunit J, chloroplastic (158 aa).

This sequence belongs to the complex I 30 kDa subunit family. As to quaternary structure, NDH is composed of at least 16 different subunits, 5 of which are encoded in the nucleus.

The protein localises to the plastid. Its subcellular location is the chloroplast thylakoid membrane. The catalysed reaction is a plastoquinone + NADH + (n+1) H(+)(in) = a plastoquinol + NAD(+) + n H(+)(out). It catalyses the reaction a plastoquinone + NADPH + (n+1) H(+)(in) = a plastoquinol + NADP(+) + n H(+)(out). Its function is as follows. NDH shuttles electrons from NAD(P)H:plastoquinone, via FMN and iron-sulfur (Fe-S) centers, to quinones in the photosynthetic chain and possibly in a chloroplast respiratory chain. The immediate electron acceptor for the enzyme in this species is believed to be plastoquinone. Couples the redox reaction to proton translocation, and thus conserves the redox energy in a proton gradient. The polypeptide is NAD(P)H-quinone oxidoreductase subunit J, chloroplastic (Lotus japonicus (Lotus corniculatus var. japonicus)).